A 384-amino-acid polypeptide reads, in one-letter code: Na(+)/H(+) antiporter NhaA (384 aa).

A run of 11 helical transmembrane segments spans residues 7 to 27, 58 to 78, 94 to 114, 124 to 144, 153 to 173, 179 to 199, 204 to 224, 256 to 276, 285 to 305, 325 to 345, and 357 to 377; these read FYNL…LAII, LLLW…GLEI, LVPA…FIFF, GWAI…SLLG, ILLT…IALF, SLLS…LNYF, ISVF…SGVH, VVFL…FVGL, VVLG…FLSL, VYGI…IGSL, and MVKI…FLVL.

The protein belongs to the NhaA Na(+)/H(+) (TC 2.A.33) antiporter family.

Its subcellular location is the cell inner membrane. The catalysed reaction is Na(+)(in) + 2 H(+)(out) = Na(+)(out) + 2 H(+)(in). In terms of biological role, na(+)/H(+) antiporter that extrudes sodium in exchange for external protons. This Legionella pneumophila (strain Corby) protein is Na(+)/H(+) antiporter NhaA.